We begin with the raw amino-acid sequence, 74 residues long: Brevinin-2Tb (74 aa).

A signal peptide spans 1–22; it reads MFTMKKSLLLFFFLGTISLSLC. Positions 23–40 are excised as a propeptide; sequence QEERNADEDDGEMTEEEK. A disulfide bond links C68 and C74.

It belongs to the frog skin active peptide (FSAP) family. Brevinin subfamily. In terms of tissue distribution, expressed by the skin glands.

Its subcellular location is the secreted. Its function is as follows. Antimicrobial peptide. The sequence is that of Brevinin-2Tb from Rana temporaria (European common frog).